Here is an 88-residue protein sequence, read N- to C-terminus: Conotoxin Ca8.3 (88 aa).

The N-terminal stretch at 1 to 21 (MMLKMGAMFVLLLLFILPSSQ) is a signal peptide. A propeptide spanning residues 22 to 46 (QEGDVQARKTHLKSGFYGTLAMSTR) is cleaved from the precursor.

Belongs to the conotoxin S superfamily. Post-translationally, contains 5 disulfide bonds. As to expression, expressed by the venom duct.

The protein localises to the secreted. The polypeptide is Conotoxin Ca8.3 (Conus caracteristicus (Characteristic cone)).